Here is a 293-residue protein sequence, read N- to C-terminus: Glycine--tRNA ligase alpha subunit (293 aa).

Belongs to the class-II aminoacyl-tRNA synthetase family. In terms of assembly, tetramer of two alpha and two beta subunits.

The protein resides in the cytoplasm. It carries out the reaction tRNA(Gly) + glycine + ATP = glycyl-tRNA(Gly) + AMP + diphosphate. In Oceanobacillus iheyensis (strain DSM 14371 / CIP 107618 / JCM 11309 / KCTC 3954 / HTE831), this protein is Glycine--tRNA ligase alpha subunit.